The sequence spans 392 residues: 8-amino-7-oxononanoate synthase (392 aa).

Arginine 21 contacts substrate. 108–109 provides a ligand contact to pyridoxal 5'-phosphate; the sequence is GF. Histidine 133 serves as a coordination point for substrate. Pyridoxal 5'-phosphate is bound by residues serine 181, 206-209, and 237-240; these read DDAH and TLSK. At lysine 240 the chain carries N6-(pyridoxal phosphate)lysine. Threonine 354 serves as a coordination point for substrate.

The protein belongs to the class-II pyridoxal-phosphate-dependent aminotransferase family. BioF subfamily. Homodimer. Pyridoxal 5'-phosphate is required as a cofactor.

The catalysed reaction is 6-carboxyhexanoyl-[ACP] + L-alanine + H(+) = (8S)-8-amino-7-oxononanoate + holo-[ACP] + CO2. Its pathway is cofactor biosynthesis; biotin biosynthesis. Its function is as follows. Catalyzes the decarboxylative condensation of pimeloyl-[acyl-carrier protein] and L-alanine to produce 8-amino-7-oxononanoate (AON), [acyl-carrier protein], and carbon dioxide. This Symbiobacterium thermophilum (strain DSM 24528 / JCM 14929 / IAM 14863 / T) protein is 8-amino-7-oxononanoate synthase.